A 29-amino-acid polypeptide reads, in one-letter code: MKIKFSRGARFSATFSFDKYPFLLYEVVR.

This is an uncharacterized protein from Saccharomyces cerevisiae (strain ATCC 204508 / S288c) (Baker's yeast).